Reading from the N-terminus, the 587-residue chain is tRNA (guanine(37)-N(1))-methyltransferase 2 (587 aa).

S-adenosyl-L-methionine is bound by residues R360 and 430–431 (DA). Residues 446-469 (ASTRSRKEDVTNKDGNHVTPTEPM) form a disordered region. The segment covering 450 to 461 (SRKEDVTNKDGN) has biased composition (basic and acidic residues). N478 contacts S-adenosyl-L-methionine.

It belongs to the class I-like SAM-binding methyltransferase superfamily. TRM5/TYW2 family. In terms of assembly, monomer.

The protein resides in the mitochondrion matrix. It is found in the nucleus. The protein localises to the cytoplasm. It carries out the reaction guanosine(37) in tRNA + S-adenosyl-L-methionine = N(1)-methylguanosine(37) in tRNA + S-adenosyl-L-homocysteine + H(+). Its function is as follows. Specifically methylates the N1 position of guanosine-37 in various cytoplasmic and mitochondrial tRNAs. Methylation is not dependent on the nature of the nucleoside 5' of the target nucleoside. This is the first step in the biosynthesis of wybutosine (yW), a modified base adjacent to the anticodon of tRNAs and required for accurate decoding. This is tRNA (guanine(37)-N(1))-methyltransferase 2 from Phaeodactylum tricornutum (strain CCAP 1055/1).